Consider the following 377-residue polypeptide: Succinyl-diaminopimelate desuccinylase (377 aa).

His-67 is a Zn(2+) binding site. Asp-69 is a catalytic residue. Asp-100 is a Zn(2+) binding site. The active-site Proton acceptor is Glu-134. Residues Glu-135, Glu-163, and His-349 each contribute to the Zn(2+) site.

It belongs to the peptidase M20A family. DapE subfamily. Homodimer. Requires Zn(2+) as cofactor. It depends on Co(2+) as a cofactor.

The enzyme catalyses N-succinyl-(2S,6S)-2,6-diaminopimelate + H2O = (2S,6S)-2,6-diaminopimelate + succinate. It participates in amino-acid biosynthesis; L-lysine biosynthesis via DAP pathway; LL-2,6-diaminopimelate from (S)-tetrahydrodipicolinate (succinylase route): step 3/3. Functionally, catalyzes the hydrolysis of N-succinyl-L,L-diaminopimelic acid (SDAP), forming succinate and LL-2,6-diaminopimelate (DAP), an intermediate involved in the bacterial biosynthesis of lysine and meso-diaminopimelic acid, an essential component of bacterial cell walls. In Shewanella frigidimarina (strain NCIMB 400), this protein is Succinyl-diaminopimelate desuccinylase.